Consider the following 228-residue polypeptide: N-acylneuraminate cytidylyltransferase (228 aa).

Belongs to the CMP-NeuNAc synthase family.

It localises to the cytoplasm. It carries out the reaction an N-acylneuraminate + CTP = a CMP-N-acyl-beta-neuraminate + diphosphate. The chain is N-acylneuraminate cytidylyltransferase (neuA) from Neisseria meningitidis serogroup B (strain ATCC BAA-335 / MC58).